Here is a 139-residue protein sequence, read N- to C-terminus: Invertebrate-type lysozyme 3 (139 aa).

An N-terminal signal peptide occupies residues 1-18 (MFVKSLVFLTIAVAYASA). Positions 19-138 (DCLHCICMRE…WNGIKSCCGC (120 aa)) constitute an I-type lysozyme domain. Cystine bridges form between Cys20–Cys106, Cys23–Cys138, Cys25–Cys31, Cys36–Cys45, Cys58–Cys86, Cys76–Cys82, and Cys98–Cys120. Glu28 serves as the catalytic Proton donor. Asp39 functions as the Nucleophile in the catalytic mechanism. 51 to 57 (KLPYYED) contributes to the substrate binding site. Substrate-binding positions include Tyr90 and 113–115 (HNG).

It belongs to the glycosyl hydrolase 22 family. Type-I lysozyme subfamily. Expressed in pharynx grinder muscle pm7, isthmus marginal cell mc2 and pharyngeal muscle cell pm5, intestinal cells and at lower levels in coelomocytes and epidermis. Expressed at low levels in intestine.

Its subcellular location is the late endosome lumen. The protein resides in the recycling endosome lumen. The protein localises to the lysosome lumen. It is found in the secreted. The enzyme catalyses Hydrolysis of (1-&gt;4)-beta-linkages between N-acetylmuramic acid and N-acetyl-D-glucosamine residues in a peptidoglycan and between N-acetyl-D-glucosamine residues in chitodextrins.. In terms of biological role, has bacteriolytic activity against Gram-positive bacteria. Plays a role in defense against bacterial pathogens. Involved in pharyngeal grinder function by enabling proper lysis of ingested bacteria. The sequence is that of Invertebrate-type lysozyme 3 from Caenorhabditis elegans.